The sequence spans 320 residues: ATP-dependent 6-phosphofructokinase (320 aa).

Residue glycine 12 participates in ATP binding. Residues 22-26 (RGVVR) and 55-60 (RYSVSD) contribute to the ADP site. ATP contacts are provided by residues 73–74 (RF) and 103–106 (GDGS). A Mg(2+)-binding site is contributed by aspartate 104. 126–128 (TID) is a substrate binding site. Catalysis depends on aspartate 128, which acts as the Proton acceptor. Residue arginine 155 participates in ADP binding. Residues arginine 163 and 170 to 172 (MGR) each bind substrate. ADP contacts are provided by residues 186–188 (GCE), lysine 212, and 214–216 (KKH). Residues glutamate 223, arginine 244, and 250-253 (HIQR) contribute to the substrate site.

Belongs to the phosphofructokinase type A (PFKA) family. ATP-dependent PFK group I subfamily. Prokaryotic clade 'B1' sub-subfamily. Homotetramer. Mg(2+) is required as a cofactor.

The protein resides in the cytoplasm. The catalysed reaction is beta-D-fructose 6-phosphate + ATP = beta-D-fructose 1,6-bisphosphate + ADP + H(+). Its pathway is carbohydrate degradation; glycolysis; D-glyceraldehyde 3-phosphate and glycerone phosphate from D-glucose: step 3/4. Its activity is regulated as follows. Allosterically activated by ADP and other diphosphonucleosides, and allosterically inhibited by phosphoenolpyruvate. Functionally, catalyzes the phosphorylation of D-fructose 6-phosphate to fructose 1,6-bisphosphate by ATP, the first committing step of glycolysis. The polypeptide is ATP-dependent 6-phosphofructokinase (Erwinia tasmaniensis (strain DSM 17950 / CFBP 7177 / CIP 109463 / NCPPB 4357 / Et1/99)).